Consider the following 213-residue polypeptide: ATP-dependent Clp protease proteolytic subunit (213 aa).

Ser-114 serves as the catalytic Nucleophile. Residue His-139 is part of the active site.

This sequence belongs to the peptidase S14 family. Fourteen ClpP subunits assemble into 2 heptameric rings which stack back to back to give a disk-like structure with a central cavity, resembling the structure of eukaryotic proteasomes.

Its subcellular location is the cytoplasm. The catalysed reaction is Hydrolysis of proteins to small peptides in the presence of ATP and magnesium. alpha-casein is the usual test substrate. In the absence of ATP, only oligopeptides shorter than five residues are hydrolyzed (such as succinyl-Leu-Tyr-|-NHMec, and Leu-Tyr-Leu-|-Tyr-Trp, in which cleavage of the -Tyr-|-Leu- and -Tyr-|-Trp bonds also occurs).. In terms of biological role, cleaves peptides in various proteins in a process that requires ATP hydrolysis. Has a chymotrypsin-like activity. Plays a major role in the degradation of misfolded proteins. This Methylobacillus flagellatus (strain ATCC 51484 / DSM 6875 / VKM B-1610 / KT) protein is ATP-dependent Clp protease proteolytic subunit.